The sequence spans 386 residues: Zinc transporter 7-A (386 aa).

The Cytoplasmic portion of the chain corresponds to 1–37 (MLPLSIKDDEYKPPKFNLARKVSGWIRSIFSDSTSRN). A helical membrane pass occupies residues 38–58 (LFCFLCLNLSFAFVELFYGIW). Residues 59–67 (SNSLGLISD) lie on the Lumenal side of the membrane. A helical transmembrane segment spans residues 68 to 88 (SFHMFFDCTALLAGLAASVIS). The Cytoplasmic segment spans residues 89–102 (RWKTNEAFSYGYVR). The helical transmembrane segment at 103 to 123 (AEVLAGFVNGLFLIFTAFFIF) threads the bilayer. Residues 124–140 (SEGVERALDTPEVHHER) are Lumenal-facing. The helical transmembrane segment at 141–161 (LLPVSIMGLLVNIIGIFVFQH) threads the bilayer. The interval 161 to 222 (HGGGHGHSHE…GHSHDHSPKH (62 aa)) is his-rich loop. Residues 162-246 (GGGHGHSHES…KGSSKQILEG (85 aa)) lie on the Cytoplasmic side of the membrane. Residues 167 to 239 (HSHESGHGHS…DEPPEEHKGS (73 aa)) form a disordered region. Basic and acidic residues predominate over residues 228–238 (CHDEPPEEHKG). Residues 247-267 (VFLHIVADTLGSVGVIFSTIL) traverse the membrane as a helical segment. Over 268-272 (MQRYG) the chain is Lumenal. The helical transmembrane segment at 273–293 (LMIADPICSMLIALLIFVSVI) threads the bilayer. At 294–386 (PLLKQSIGIL…LYVQIDFAAI (93 aa)) the chain is on the cytoplasmic side.

The protein belongs to the cation diffusion facilitator (CDF) transporter (TC 2.A.4) family. SLC30A subfamily. In terms of assembly, homooligomer.

Its subcellular location is the golgi apparatus membrane. The protein localises to the cytoplasmic vesicle. It localises to the golgi apparatus. It is found in the trans-Golgi network. The protein resides in the sarcoplasmic reticulum. Its subcellular location is the mitochondrion. It catalyses the reaction Zn(2+)(in) = Zn(2+)(out). In terms of biological role, zinc ion transporter mediating zinc entry from the cytosol into the lumen of organelles along the secretory pathway. By contributing to zinc ion homeostasis within the early secretory pathway, regulates the activation and folding of enzymes like alkaline phosphatases. The sequence is that of Zinc transporter 7-A (slc30a7-a) from Xenopus laevis (African clawed frog).